A 238-amino-acid chain; its full sequence is Ubiquinone biosynthesis O-methyltransferase (238 aa).

S-adenosyl-L-methionine is bound by residues R40, G59, D80, and M125.

This sequence belongs to the methyltransferase superfamily. UbiG/COQ3 family.

It carries out the reaction a 3-demethylubiquinol + S-adenosyl-L-methionine = a ubiquinol + S-adenosyl-L-homocysteine + H(+). The enzyme catalyses a 3-(all-trans-polyprenyl)benzene-1,2-diol + S-adenosyl-L-methionine = a 2-methoxy-6-(all-trans-polyprenyl)phenol + S-adenosyl-L-homocysteine + H(+). It functions in the pathway cofactor biosynthesis; ubiquinone biosynthesis. Functionally, O-methyltransferase that catalyzes the 2 O-methylation steps in the ubiquinone biosynthetic pathway. This is Ubiquinone biosynthesis O-methyltransferase from Paracidovorax citrulli (strain AAC00-1) (Acidovorax citrulli).